The chain runs to 615 residues: DNA mismatch repair protein MutL (615 aa).

The disordered stretch occupies residues 363–397 (FAEPAVREPVAPRYTPAPASGSRPAAPWPNAQPGY). Positions 378–391 (PAPASGSRPAAPWP) are enriched in low complexity.

Belongs to the DNA mismatch repair MutL/HexB family.

This protein is involved in the repair of mismatches in DNA. It is required for dam-dependent methyl-directed DNA mismatch repair. May act as a 'molecular matchmaker', a protein that promotes the formation of a stable complex between two or more DNA-binding proteins in an ATP-dependent manner without itself being part of a final effector complex. The protein is DNA mismatch repair protein MutL of Escherichia coli O157:H7 (strain EC4115 / EHEC).